The sequence spans 133 residues: Small ribosomal subunit protein uS19 (133 aa).

Belongs to the universal ribosomal protein uS19 family.

In terms of biological role, protein S19 forms a complex with S13 that binds strongly to the 16S ribosomal RNA. This chain is Small ribosomal subunit protein uS19, found in Thermococcus sibiricus (strain DSM 12597 / MM 739).